The following is a 559-amino-acid chain: Oxygen-dependent choline dehydrogenase (559 aa).

Residue 4–33 coordinates FAD; it reads DYIIIGAGSAGNVLATRLTEDSDVTVLLLE. Residue H473 is the Proton acceptor of the active site.

This sequence belongs to the GMC oxidoreductase family. The cofactor is FAD.

It catalyses the reaction choline + A = betaine aldehyde + AH2. It carries out the reaction betaine aldehyde + NAD(+) + H2O = glycine betaine + NADH + 2 H(+). It functions in the pathway amine and polyamine biosynthesis; betaine biosynthesis via choline pathway; betaine aldehyde from choline (cytochrome c reductase route): step 1/1. In terms of biological role, involved in the biosynthesis of the osmoprotectant glycine betaine. Catalyzes the oxidation of choline to betaine aldehyde and betaine aldehyde to glycine betaine at the same rate. The sequence is that of Oxygen-dependent choline dehydrogenase from Cronobacter sakazakii (strain ATCC BAA-894) (Enterobacter sakazakii).